The sequence spans 54 residues: Ribulose bisphosphate carboxylase large chain (54 aa).

Positions M1 to S2 are excised as a propeptide. N-acetylproline is present on P3. At K14 the chain carries N6,N6,N6-trimethyllysine.

The protein belongs to the RuBisCO large chain family. Type I subfamily. In terms of assembly, heterohexadecamer of 8 large chains and 8 small chains.

It localises to the plastid. The protein resides in the chloroplast. The catalysed reaction is 2 (2R)-3-phosphoglycerate + 2 H(+) = D-ribulose 1,5-bisphosphate + CO2 + H2O. The enzyme catalyses D-ribulose 1,5-bisphosphate + O2 = 2-phosphoglycolate + (2R)-3-phosphoglycerate + 2 H(+). RuBisCO catalyzes two reactions: the carboxylation of D-ribulose 1,5-bisphosphate, the primary event in carbon dioxide fixation, as well as the oxidative fragmentation of the pentose substrate in the photorespiration process. Both reactions occur simultaneously and in competition at the same active site. In Ilex ciliospinosa (Sichuan holly), this protein is Ribulose bisphosphate carboxylase large chain (rbcL).